We begin with the raw amino-acid sequence, 111 residues long: DNA-binding protein AF_2068 (111 aa).

The protein belongs to the PDCD5 family.

This chain is DNA-binding protein AF_2068, found in Archaeoglobus fulgidus (strain ATCC 49558 / DSM 4304 / JCM 9628 / NBRC 100126 / VC-16).